A 512-amino-acid chain; its full sequence is Ribonuclease Y (512 aa).

A helical membrane pass occupies residues 3-23 (FQIILVVIISALVGLVIGFFI). In terms of domain architecture, KH spans 202–265 (TVAVIPLPND…EVARLALERL (64 aa)). The 94-residue stretch at 328–421 (VLKHSIEVCH…VQAADAISAA (94 aa)) folds into the HD domain.

It belongs to the RNase Y family.

It is found in the cell membrane. In terms of biological role, endoribonuclease that initiates mRNA decay. This Desulforamulus reducens (strain ATCC BAA-1160 / DSM 100696 / MI-1) (Desulfotomaculum reducens) protein is Ribonuclease Y.